A 335-amino-acid chain; its full sequence is HTH-type transcriptional regulator MalR (335 aa).

The HTH lacI-type domain occupies 1-55 (MNIKDIARLSGVGVSTVSRVINNHPDVKQSTREKVLQIIKDSNYIPNNSARILKQ). The segment at residues 3–22 (IKDIARLSGVGVSTVSRVIN) is a DNA-binding region (H-T-H motif).

Functionally, repressor of glucanotransferase gene expression. This is HTH-type transcriptional regulator MalR from Clostridium butyricum.